Here is a 400-residue protein sequence, read N- to C-terminus: Subtilisin-like protease 7 (400 aa).

An N-terminal signal peptide occupies residues 1–20 (MGFITKAIPLALAAASVING). The propeptide occupies 21–119 (AEILETRAGV…IERDARVQIN (99 aa)). The Inhibitor I9 domain maps to 36–118 (KYIVVMNDGI…YIERDARVQI (83 aa)). Residues 129 to 400 (SWGLARVGSK…SKLINNGSGM (272 aa)) form the Peptidase S8 domain. Residues aspartate 161 and histidine 192 each act as charge relay system in the active site. Residues asparagine 222 and asparagine 252 are each glycosylated (N-linked (GlcNAc...) asparagine). Serine 346 acts as the Charge relay system in catalysis. N-linked (GlcNAc...) asparagine glycosylation occurs at asparagine 396.

It belongs to the peptidase S8 family.

Its subcellular location is the secreted. In terms of biological role, secreted subtilisin-like serine protease with keratinolytic activity that contributes to pathogenicity. The polypeptide is Subtilisin-like protease 7 (SUB7) (Trichophyton soudanense).